The following is a 496-amino-acid chain: Maturase K (496 aa).

The protein belongs to the intron maturase 2 family. MatK subfamily.

Its subcellular location is the plastid. The protein resides in the chloroplast. In terms of biological role, usually encoded in the trnK tRNA gene intron. Probably assists in splicing its own and other chloroplast group II introns. The sequence is that of Maturase K from Paeonia peregrina (Common peony).